Here is a 470-residue protein sequence, read N- to C-terminus: Membrane-bound lytic murein transglycosylase F (470 aa).

The N-terminal stretch at 1–21 (MLKEKLIIIITLVMLLCACDI) is a signal peptide. The segment at 22–259 (QEQSTQLAQI…VLEEKYFGHV (238 aa)) is non-LT domain. The tract at residues 260 to 470 (RQFNYVNTLA…PKIGDEVEAK (211 aa)) is LT domain. E304 is an active-site residue.

The protein in the N-terminal section; belongs to the bacterial solute-binding protein 3 family. It in the C-terminal section; belongs to the transglycosylase Slt family.

The protein resides in the cell outer membrane. It catalyses the reaction Exolytic cleavage of the (1-&gt;4)-beta-glycosidic linkage between N-acetylmuramic acid (MurNAc) and N-acetylglucosamine (GlcNAc) residues in peptidoglycan, from either the reducing or the non-reducing ends of the peptidoglycan chains, with concomitant formation of a 1,6-anhydrobond in the MurNAc residue.. In terms of biological role, murein-degrading enzyme that degrades murein glycan strands and insoluble, high-molecular weight murein sacculi, with the concomitant formation of a 1,6-anhydromuramoyl product. Lytic transglycosylases (LTs) play an integral role in the metabolism of the peptidoglycan (PG) sacculus. Their lytic action creates space within the PG sacculus to allow for its expansion as well as for the insertion of various structures such as secretion systems and flagella. The chain is Membrane-bound lytic murein transglycosylase F from Pseudoalteromonas translucida (strain TAC 125).